A 170-amino-acid polypeptide reads, in one-letter code: Photosystem I assembly protein Ycf3 (170 aa).

3 TPR repeats span residues 35–68, 72–105, and 120–153; these read AFTY…EVDA, SYIL…NPSL, and GEQA…APTN.

This sequence belongs to the Ycf3 family.

Its subcellular location is the plastid. It localises to the chloroplast thylakoid membrane. In terms of biological role, essential for the assembly of the photosystem I (PSI) complex. May act as a chaperone-like factor to guide the assembly of the PSI subunits. This Tetradesmus obliquus (Green alga) protein is Photosystem I assembly protein Ycf3.